The following is an 808-amino-acid chain: Spindle assembly abnormal protein 4 (808 aa).

Positions 1–151 (MASDENIGAD…PDEPSTLVNS (151 aa)) are disordered. Low complexity predominate over residues 42–54 (PPTSELSSASSPS). Polar residues-rich tracts occupy residues 61–78 (SLSN…SGIS) and 85–104 (PPTT…SPEN). The span at 113 to 123 (AEEHGHSGQHA) shows a compositional bias: basic and acidic residues. Positions 124–133 (EEEEDNDTDE) are enriched in acidic residues. Residues 161–181 (KYKNAAAEFKAFERRMDSMRS) adopt a coiled-coil conformation. Disordered regions lie at residues 187–206 (TSLA…PPTR) and 271–298 (VTAP…DENR). Over residues 280–294 (MMNSSRQNPQNGNVQ) the composition is skewed to polar residues. A coiled-coil region spans residues 314–503 (LDRQKLEIEI…ERDDKEKEMF (190 aa)). Polar residues predominate over residues 511 to 529 (KTSNPVPPVLNQSVPISIT). The interval 511–564 (KTSNPVPPVLNQSVPISITSNGPSRHPSSSSLTTFRKPSTSNRERGVSWADEPN) is disordered. Over residues 530 to 541 (SNGPSRHPSSSS) the composition is skewed to low complexity. Residues 542–551 (LTTFRKPSTS) show a composition bias toward polar residues.

Interacts with hyls-1; leading to hyls-1 localization into newly forming centrioles.

It is found in the cytoplasm. The protein resides in the cytoskeleton. Its subcellular location is the microtubule organizing center. It localises to the centrosome. Required for centrosome duplication. Plays a central role in determining centrosome size. The polypeptide is Spindle assembly abnormal protein 4 (sas-4) (Caenorhabditis elegans).